Reading from the N-terminus, the 193-residue chain is Der GTPase-activating protein YihI (193 aa).

Positions 1–12 are enriched in basic residues; the sequence is MSAKQPNRKPTG. 2 disordered regions span residues 1 to 91 and 143 to 193; these read MSAK…KLVM and IIDN…PKKK. The span at 13-26 shows a compositional bias: basic and acidic residues; that stretch reads KRKESDASALDGRE. A compositionally biased stretch (basic residues) spans 27-36; sequence RKRAAKRKGL. A compositionally biased stretch (polar residues) spans 40 to 54; the sequence is SRQQAEQSSKNNNGK. Over residues 145 to 160 the composition is skewed to acidic residues; that stretch reads DNDDDEEDDGSFDDAS. Residues 184–193 show a composition bias toward basic and acidic residues; the sequence is PEPKPEPKKK.

The protein belongs to the YihI family. In terms of assembly, interacts with Der.

A GTPase-activating protein (GAP) that modifies Der/EngA GTPase function. May play a role in ribosome biogenesis. The protein is Der GTPase-activating protein YihI of Aeromonas salmonicida (strain A449).